Reading from the N-terminus, the 242-residue chain is Uridylate kinase (242 aa).

16–19 contributes to the ATP binding site; the sequence is KVSG. Position 58 (glycine 58) interacts with UMP. The ATP site is built by glycine 59 and arginine 63. UMP contacts are provided by residues aspartate 78 and 139–146; that span reads TGNPFCTT. 4 residues coordinate ATP: threonine 166, glutamine 167, tyrosine 172, and aspartate 175.

The protein belongs to the UMP kinase family. As to quaternary structure, homohexamer.

It localises to the cytoplasm. The enzyme catalyses UMP + ATP = UDP + ADP. Its pathway is pyrimidine metabolism; CTP biosynthesis via de novo pathway; UDP from UMP (UMPK route): step 1/1. Inhibited by UTP. In terms of biological role, catalyzes the reversible phosphorylation of UMP to UDP. This is Uridylate kinase from Rickettsia conorii (strain ATCC VR-613 / Malish 7).